The sequence spans 417 residues: Serpin H1 (417 aa).

An N-terminal signal peptide occupies residues 1–17 (MRSLLLGTLCLLAVALA). Lys-93 carries the post-translational modification N6-succinyllysine. Asn-119 and Asn-124 each carry an N-linked (GlcNAc...) asparagine glycan. Ser-140 is modified (phosphoserine). An N6-acetyllysine modification is found at Lys-206. Residue Lys-295 is modified to N6-succinyllysine. N6-acetyllysine is present on Lys-318. A glycan (N-linked (GlcNAc...) asparagine) is linked at Asn-394. The Prevents secretion from ER motif lies at 414–417 (RDEL).

This sequence belongs to the serpin family.

The protein resides in the endoplasmic reticulum lumen. Binds specifically to collagen. Could be involved as a chaperone in the biosynthetic pathway of collagen. This chain is Serpin H1 (Serpinh1), found in Rattus norvegicus (Rat).